Consider the following 346-residue polypeptide: Phosphate acyltransferase (346 aa).

Belongs to the PlsX family. As to quaternary structure, homodimer. Probably interacts with PlsY.

The protein resides in the cytoplasm. The catalysed reaction is a fatty acyl-[ACP] + phosphate = an acyl phosphate + holo-[ACP]. The protein operates within lipid metabolism; phospholipid metabolism. Catalyzes the reversible formation of acyl-phosphate (acyl-PO(4)) from acyl-[acyl-carrier-protein] (acyl-ACP). This enzyme utilizes acyl-ACP as fatty acyl donor, but not acyl-CoA. This Brucella suis biovar 1 (strain 1330) protein is Phosphate acyltransferase.